The sequence spans 136 residues: Putative zinc finger protein 818 (136 aa).

The C2H2-type 1; degenerate zinc-finger motif lies at 64–83 (NVCGKVLSQNSHLVNHQRIH). Residues 89-111 (YRCHECGKAFTQGSRFINHQIVH) form a C2H2-type 2 zinc finger.

It belongs to the krueppel C2H2-type zinc-finger protein family.

It is found in the nucleus. In terms of biological role, may be involved in transcriptional regulation. This chain is Putative zinc finger protein 818 (ZNF818P), found in Homo sapiens (Human).